We begin with the raw amino-acid sequence, 692 residues long: Zinc finger protein 180 (692 aa).

The KRAB domain maps to V72–D145. Residues K138, K159, K168, K191, K198, K226, K304, K313, and K330 each participate in a glycyl lysine isopeptide (Lys-Gly) (interchain with G-Cter in SUMO2) cross-link. 12 consecutive C2H2-type zinc fingers follow at residues F353–H375, Y381–H403, Y409–H431, Y437–H459, Y465–H487, Y493–H515, F521–H543, Y549–H571, Y577–H599, Y605–H627, F633–H655, and F661–H683.

It belongs to the krueppel C2H2-type zinc-finger protein family.

Its subcellular location is the nucleus. In terms of biological role, may be involved in transcriptional regulation. The chain is Zinc finger protein 180 (ZNF180) from Homo sapiens (Human).